We begin with the raw amino-acid sequence, 812 residues long: Valine--tRNA ligase (812 aa).

A 'HIGH' region motif is present at residues 47 to 57 (PTISGQLHIGH). Positions 536–540 (KMSKS) match the 'KMSKS' region motif. K539 is a binding site for ATP.

The protein belongs to the class-I aminoacyl-tRNA synthetase family. ValS type 2 subfamily. As to quaternary structure, monomer.

It localises to the cytoplasm. The catalysed reaction is tRNA(Val) + L-valine + ATP = L-valyl-tRNA(Val) + AMP + diphosphate. Its function is as follows. Catalyzes the attachment of valine to tRNA(Val). As ValRS can inadvertently accommodate and process structurally similar amino acids such as threonine, to avoid such errors, it has a 'posttransfer' editing activity that hydrolyzes mischarged Thr-tRNA(Val) in a tRNA-dependent manner. This chain is Valine--tRNA ligase, found in Ehrlichia ruminantium (strain Gardel).